The sequence spans 594 residues: Putative lipase ATG15-1 (594 aa).

The Cytoplasmic portion of the chain corresponds to 1-12 (MRRRPLCTSASR). Residues 13–33 (VTASLLLSFLAVSSAAELPIL) traverse the membrane as a helical; Signal-anchor for type II membrane protein segment. Residues 34-594 (PAPPISPQPH…ANHFVYVLHA (561 aa)) lie on the Lumenal side of the membrane. 5 N-linked (GlcNAc...) asparagine glycosylation sites follow: Asn-144, Asn-179, Asn-201, Asn-259, and Asn-283. Ser-299 functions as the Charge relay system in the catalytic mechanism. Residues Asn-432 and Asn-445 are each glycosylated (N-linked (GlcNAc...) asparagine). Positions 447 to 469 (TETTTTSTSKPTSTSKSSKSNTR) are enriched in low complexity. Disordered regions lie at residues 447-473 (TETTTTSTSKPTSTSKSSKSNTRTRTE) and 489-509 (TGTQTSTSTPKHTSTSSTSTC). Residues Asn-576 and Asn-582 are each glycosylated (N-linked (GlcNAc...) asparagine).

It belongs to the AB hydrolase superfamily. Lipase family. As to quaternary structure, binds to both phosphatidylinositol (PI) and phosphatidylinositol 3,5-bisphosphate (PIP2).

It is found in the endosome. The protein localises to the multivesicular body membrane. Its subcellular location is the prevacuolar compartment membrane. The enzyme catalyses a triacylglycerol + H2O = a diacylglycerol + a fatty acid + H(+). Its function is as follows. Lipase which is essential for lysis of subvacuolar cytoplasm to vacuole targeted bodies and intravacuolar autophagic bodies. Involved in the lysis of intravacuolar multivesicular body (MVB) vesicles. The intravacuolar membrane disintegration by ATG15 is critical to life span extension. The polypeptide is Putative lipase ATG15-1 (ATG15-1) (Phaeosphaeria nodorum (strain SN15 / ATCC MYA-4574 / FGSC 10173) (Glume blotch fungus)).